Consider the following 397-residue polypeptide: Dimethyladenosine transferase 2, mitochondrial (397 aa).

The transit peptide at 1–44 (MRGLAMRLPPRLALSVLAGRGPSCILGSGAATRKDWQERNRRSF) directs the protein to the mitochondrion. 3 residues coordinate S-adenosyl-L-methionine: Ile75, Glu124, and Asp150. Residues 329 to 330 (KR) form a DNA-binding region.

The protein belongs to the class I-like SAM-binding methyltransferase superfamily. rRNA adenine N(6)-methyltransferase family. KsgA subfamily. In terms of assembly, homodimer. Component of the mitochondrial transcription initiation complex, composed at least of TFB2M, TFAM and POLRMT. In this complex TFAM recruits POLRMT to the promoter whereas TFB2M induces structural changes in POLRMT to enable promoter opening and trapping of the DNA non-template strand. Interacts with mitochondrial RNA polymerase POLRMT. Interacts with TFAM.

The protein resides in the mitochondrion. It carries out the reaction adenosine in rRNA + S-adenosyl-L-methionine = N(6)-methyladenosine in rRNA + S-adenosyl-L-homocysteine + H(+). Functionally, S-adenosyl-L-methionine-dependent rRNA methyltransferase which may methylate two specific adjacent adenosines in the loop of a conserved hairpin near the 3'-end of 12S mitochondrial rRNA. Component of the mitochondrial transcription initiation complex, composed at least of TFB2M, TFAM and POLRMT that is required for basal transcription of mitochondrial DNA. In this complex TFAM recruits POLRMT to a specific promoter whereas TFB2M induces structural changes in POLRMT to enable promoter opening and trapping of the DNA non-template strand. Stimulates transcription independently of the methyltransferase activity. In Rattus norvegicus (Rat), this protein is Dimethyladenosine transferase 2, mitochondrial.